The primary structure comprises 365 residues: MTHPQKTPLYDIHKERGGKIIDFGGWYLPVQFTGIIDEVMTTRKEAGLFDVSHMGEIIVEGPKALEYLQKMVPNDVARLKPGKILYTPMCYENGGTVDDFLIYKMDENKFLLIVNAANTDKDFEWLQENNTEGVELKNLSDEYGQIAIQGPKAEKILQRLTDTPLKEIKFFNFKEDVDLDGVKALISRTGYTGENGFEIYIKAEETAKLWEKIEDAGENDGLKPIGLGARDVLRFEVCLPLYGNELSPEITPLEARLNPFVKLNKTEDFLGKDVLVNQKEQGLERVLVGFEMIDRGIPRTNYILMKDGQEIGFVSSGSQSPTLDKALGLGFIKPEHDQEGNEIEVKIRKKTAKAKIVKTPFYRRG.

This sequence belongs to the GcvT family. As to quaternary structure, the glycine cleavage system is composed of four proteins: P, T, L and H.

The catalysed reaction is N(6)-[(R)-S(8)-aminomethyldihydrolipoyl]-L-lysyl-[protein] + (6S)-5,6,7,8-tetrahydrofolate = N(6)-[(R)-dihydrolipoyl]-L-lysyl-[protein] + (6R)-5,10-methylene-5,6,7,8-tetrahydrofolate + NH4(+). Its function is as follows. The glycine cleavage system catalyzes the degradation of glycine. The protein is Aminomethyltransferase of Natranaerobius thermophilus (strain ATCC BAA-1301 / DSM 18059 / JW/NM-WN-LF).